The primary structure comprises 217 residues: Probable GTP-binding protein EngB (217 aa).

Positions 33–217 constitute an EngB-type G domain; the sequence is GPTEIAFAGR…RAAIELAVTR (185 aa). GTP is bound by residues 41-48, 68-72, 95-98, 162-165, and 196-198; these read GRSNVGKS, GRTQE, DMPG, TKTD, and TSS. 2 residues coordinate Mg(2+): Ser-48 and Thr-70.

The protein belongs to the TRAFAC class TrmE-Era-EngA-EngB-Septin-like GTPase superfamily. EngB GTPase family. Mg(2+) serves as cofactor.

In terms of biological role, necessary for normal cell division and for the maintenance of normal septation. The polypeptide is Probable GTP-binding protein EngB (Rhizobium meliloti (strain 1021) (Ensifer meliloti)).